A 375-amino-acid chain; its full sequence is Growth/differentiation factor 8 (375 aa).

An N-terminal signal peptide occupies residues 1–23 (MQKLAVYVYIYLFMQIAVDPVAL). Positions 24-266 (DGSSQPTENA…VTDTPKRSRR (243 aa)) are excised as a propeptide. The N-linked (GlcNAc...) asparagine glycan is linked to Asn-71. 4 cysteine pairs are disulfide-bonded: Cys-272–Cys-282, Cys-281–Cys-340, Cys-309–Cys-372, and Cys-313–Cys-374.

This sequence belongs to the TGF-beta family. In terms of assembly, homodimer; disulfide-linked.

The protein resides in the secreted. Functionally, acts specifically as a negative regulator of skeletal muscle growth. This Gallus gallus (Chicken) protein is Growth/differentiation factor 8 (MSTN).